The chain runs to 110 residues: UPF0060 membrane protein Bcep18194_A4425 (110 aa).

Helical transmembrane passes span 9–29, 34–54, 66–86, and 88–108; these read ALFAATALAEIVGCYLPWLVL, PVWLLVPAALSLALFAWLLTL, YGGVYIAVALVWLRVVDGVAL, and RWDVAGAVLALGGMAVIALQP.

The protein belongs to the UPF0060 family.

It localises to the cell inner membrane. The chain is UPF0060 membrane protein Bcep18194_A4425 from Burkholderia lata (strain ATCC 17760 / DSM 23089 / LMG 22485 / NCIMB 9086 / R18194 / 383).